We begin with the raw amino-acid sequence, 673 residues long: UvrABC system protein B (673 aa).

A Helicase ATP-binding domain is found at 26–414; the sequence is EGLEDGLAHQ…GDEVVDQVVR (389 aa). Residue 39 to 46 coordinates ATP; it reads GVTGSGKT. The Beta-hairpin signature appears at 92–115; sequence YYDYYQPEAYVPSSDTFIEKDASV. In terms of domain architecture, Helicase C-terminal spans 431–597; that stretch reads QVDDLLSEIR…GLNKKVVDIL (167 aa). In terms of domain architecture, UVR spans 633 to 668; sequence QQKIHELEEQMMQHAQNLEFEEAAQIRDQLHQLREL.

This sequence belongs to the UvrB family. In terms of assembly, forms a heterotetramer with UvrA during the search for lesions. Interacts with UvrC in an incision complex.

It is found in the cytoplasm. Its function is as follows. The UvrABC repair system catalyzes the recognition and processing of DNA lesions. A damage recognition complex composed of 2 UvrA and 2 UvrB subunits scans DNA for abnormalities. Upon binding of the UvrA(2)B(2) complex to a putative damaged site, the DNA wraps around one UvrB monomer. DNA wrap is dependent on ATP binding by UvrB and probably causes local melting of the DNA helix, facilitating insertion of UvrB beta-hairpin between the DNA strands. Then UvrB probes one DNA strand for the presence of a lesion. If a lesion is found the UvrA subunits dissociate and the UvrB-DNA preincision complex is formed. This complex is subsequently bound by UvrC and the second UvrB is released. If no lesion is found, the DNA wraps around the other UvrB subunit that will check the other stand for damage. This chain is UvrABC system protein B, found in Salmonella typhi.